The sequence spans 366 residues: Aminomethyltransferase (366 aa).

The protein belongs to the GcvT family. In terms of assembly, the glycine cleavage system is composed of four proteins: P, T, L and H.

The catalysed reaction is N(6)-[(R)-S(8)-aminomethyldihydrolipoyl]-L-lysyl-[protein] + (6S)-5,6,7,8-tetrahydrofolate = N(6)-[(R)-dihydrolipoyl]-L-lysyl-[protein] + (6R)-5,10-methylene-5,6,7,8-tetrahydrofolate + NH4(+). In terms of biological role, the glycine cleavage system catalyzes the degradation of glycine. In Bordetella petrii (strain ATCC BAA-461 / DSM 12804 / CCUG 43448), this protein is Aminomethyltransferase.